The chain runs to 350 residues: Lipoyl synthase (350 aa).

Residues 1-39 form a disordered region; the sequence is MSDTSSPKPVASGEKFRTAQGITAIKDGQKRRASAEPQV. Residues Cys73, Cys78, Cys84, Cys99, Cys103, Cys106, and Ser314 each coordinate [4Fe-4S] cluster. Positions 85–303 constitute a Radical SAM core domain; the sequence is WSNGTATIML…RDIGLEKGFM (219 aa).

Belongs to the radical SAM superfamily. Lipoyl synthase family. [4Fe-4S] cluster is required as a cofactor.

The protein resides in the cytoplasm. The catalysed reaction is [[Fe-S] cluster scaffold protein carrying a second [4Fe-4S](2+) cluster] + N(6)-octanoyl-L-lysyl-[protein] + 2 oxidized [2Fe-2S]-[ferredoxin] + 2 S-adenosyl-L-methionine + 4 H(+) = [[Fe-S] cluster scaffold protein] + N(6)-[(R)-dihydrolipoyl]-L-lysyl-[protein] + 4 Fe(3+) + 2 hydrogen sulfide + 2 5'-deoxyadenosine + 2 L-methionine + 2 reduced [2Fe-2S]-[ferredoxin]. It participates in protein modification; protein lipoylation via endogenous pathway; protein N(6)-(lipoyl)lysine from octanoyl-[acyl-carrier-protein]: step 2/2. Catalyzes the radical-mediated insertion of two sulfur atoms into the C-6 and C-8 positions of the octanoyl moiety bound to the lipoyl domains of lipoate-dependent enzymes, thereby converting the octanoylated domains into lipoylated derivatives. The sequence is that of Lipoyl synthase from Ectopseudomonas mendocina (strain ymp) (Pseudomonas mendocina).